The chain runs to 946 residues: Serine/threonine-protein kinase PLK4 (946 aa).

In terms of domain architecture, Protein kinase spans 12–265 (FKVLNLLGKG…LSSVLDHAFM (254 aa)). ATP is bound by residues 18–26 (LGKGSFACV) and Lys-41. Catalysis depends on Asp-136, which acts as the Proton acceptor. The interval 330 to 395 (HPAERSNGGS…TYGKPSSFSE (66 aa)) is disordered. Polar residues predominate over residues 378–394 (RSGTSQSQTYGKPSSFS). The region spanning 566–679 (TLRSIISPLN…AKFIQLVRSK (114 aa)) is the Cryptic POLO box 1 (CPB1) domain. Residues 680-792 (MPKVTYYTRY…GRRPAITESP (113 aa)) enclose the Cryptic POLO box 2 (CPB2) domain. The interval 789–828 (TESPRTQLTVDSARERKDEQSSANRVLHSSATSPPQIPNI) is disordered. Residues 809-828 (SSANRVLHSSATSPPQIPNI) show a composition bias toward polar residues. The POLO box domain maps to 864–942 (QVLKSVFVEN…LSSILMLFAS (79 aa)).

This sequence belongs to the protein kinase superfamily. Ser/Thr protein kinase family. CDC5/Polo subfamily. In terms of assembly, homodimer. Post-translationally, ubiquitinated; leading to its degradation by the proteasome.

The protein localises to the cytoplasm. Its subcellular location is the cytoskeleton. The protein resides in the microtubule organizing center. It is found in the centrosome. It localises to the centriole. The catalysed reaction is L-seryl-[protein] + ATP = O-phospho-L-seryl-[protein] + ADP + H(+). It catalyses the reaction L-threonyl-[protein] + ATP = O-phospho-L-threonyl-[protein] + ADP + H(+). Its function is as follows. Serine/threonine-protein kinase that plays a central role in centriole duplication. Able to trigger procentriole formation on the surface of the parental centriole cylinder, leading to the recruitment of centriole biogenesis proteins such as sass6, cpap, ccp110, cep135 and gamma-tubulin. When overexpressed, it is able to induce centrosome amplification through the simultaneous generation of multiple procentrioles adjoining each parental centriole during S phase. Its central role in centriole replication suggests a possible role in tumorigenesis, centrosome aberrations being frequently observed in tumors. Also involved in deuterosome-mediated centriole amplification in multiciliated that can generate more than 100 centrioles. This is Serine/threonine-protein kinase PLK4 from Xenopus tropicalis (Western clawed frog).